The following is a 341-amino-acid chain: UDP-3-O-acylglucosamine N-acyltransferase (341 aa).

His255 (proton acceptor) is an active-site residue.

Belongs to the transferase hexapeptide repeat family. LpxD subfamily. In terms of assembly, homotrimer.

The enzyme catalyses a UDP-3-O-[(3R)-3-hydroxyacyl]-alpha-D-glucosamine + a (3R)-hydroxyacyl-[ACP] = a UDP-2-N,3-O-bis[(3R)-3-hydroxyacyl]-alpha-D-glucosamine + holo-[ACP] + H(+). Its pathway is bacterial outer membrane biogenesis; LPS lipid A biosynthesis. Its function is as follows. Catalyzes the N-acylation of UDP-3-O-acylglucosamine using 3-hydroxyacyl-ACP as the acyl donor. Is involved in the biosynthesis of lipid A, a phosphorylated glycolipid that anchors the lipopolysaccharide to the outer membrane of the cell. This Granulibacter bethesdensis (strain ATCC BAA-1260 / CGDNIH1) protein is UDP-3-O-acylglucosamine N-acyltransferase.